The primary structure comprises 345 residues: Uroporphyrinogen decarboxylase (345 aa).

Residues 24-28 (RQAGR), D74, Y150, S205, and H318 contribute to the substrate site.

Belongs to the uroporphyrinogen decarboxylase family. As to quaternary structure, homodimer.

The protein localises to the cytoplasm. The catalysed reaction is uroporphyrinogen III + 4 H(+) = coproporphyrinogen III + 4 CO2. It participates in porphyrin-containing compound metabolism; protoporphyrin-IX biosynthesis; coproporphyrinogen-III from 5-aminolevulinate: step 4/4. Catalyzes the decarboxylation of four acetate groups of uroporphyrinogen-III to yield coproporphyrinogen-III. This Dichelobacter nodosus (strain VCS1703A) protein is Uroporphyrinogen decarboxylase.